Consider the following 187-residue polypeptide: MSYRRETRETLVVVELVPGAVAQVETPIPFLTHMVETFLFYAGLGGRVYAEEKRRLDDGHHVIEDVAIALGRALDQLIGDRSAVARYGWAAVPMDDAFALAAVDLGGRPYWVVKAKLPNVAIGGYPLPMFPHWVRSLASEARATIHIYARGRDPHHKVEAAHKALGLALRAAVSPASGVQSTKGVLK.

It belongs to the imidazoleglycerol-phosphate dehydratase family.

The protein localises to the cytoplasm. The catalysed reaction is D-erythro-1-(imidazol-4-yl)glycerol 3-phosphate = 3-(imidazol-4-yl)-2-oxopropyl phosphate + H2O. Its pathway is amino-acid biosynthesis; L-histidine biosynthesis; L-histidine from 5-phospho-alpha-D-ribose 1-diphosphate: step 6/9. This chain is Imidazoleglycerol-phosphate dehydratase, found in Pyrobaculum calidifontis (strain DSM 21063 / JCM 11548 / VA1).